The primary structure comprises 688 residues: Translation initiation factor IF-2 (688 aa).

Composition is skewed to basic and acidic residues over residues 53–62 and 86–95; these read GKEKSEKTKE and KRDDKNEKVN. Residues 53-100 form a disordered region; the sequence is GKEKSEKTKEEDDEIETTAKNPIKESMNNKKSNKRDDKNEKVNTENAE. The tr-type G domain maps to 187-354; sequence KRSPIITVMG…MILLSSEILE (168 aa). Residues 196–203 are G1; that stretch reads GHVDHGKT. Position 196–203 (196–203) interacts with GTP; it reads GHVDHGKT. The interval 221–225 is G2; sequence GITQH. The segment at 242-245 is G3; the sequence is DTPG. Residues 242–246 and 296–299 each bind GTP; these read DTPGH and NKID. Residues 296 to 299 are G4; sequence NKID. The G5 stretch occupies residues 332–334; sequence SAH.

It belongs to the TRAFAC class translation factor GTPase superfamily. Classic translation factor GTPase family. IF-2 subfamily.

Its subcellular location is the cytoplasm. One of the essential components for the initiation of protein synthesis. Protects formylmethionyl-tRNA from spontaneous hydrolysis and promotes its binding to the 30S ribosomal subunits. Also involved in the hydrolysis of GTP during the formation of the 70S ribosomal complex. This chain is Translation initiation factor IF-2, found in Clostridium botulinum (strain Kyoto / Type A2).